Here is a 607-residue protein sequence, read N- to C-terminus: V-type proton ATPase catalytic subunit A (607 aa).

Residue 251 to 258 (GAFGCGKT) coordinates ATP.

Belongs to the ATPase alpha/beta chains family. In terms of assembly, V-ATPase is a heteromultimeric enzyme composed of a peripheral catalytic V1 complex (components A to H) attached to an integral membrane V0 proton pore complex (components: a, c, c', c'', d, e, f and VOA1).

The protein localises to the vacuole membrane. The catalysed reaction is ATP + H2O + 4 H(+)(in) = ADP + phosphate + 5 H(+)(out). Catalytic subunit of the V1 complex of vacuolar(H+)-ATPase (V-ATPase), a multisubunit enzyme composed of a peripheral complex (V1) that hydrolyzes ATP and a membrane integral complex (V0) that translocates protons. V-ATPase is responsible for acidifying and maintaining the pH of intracellular compartments. The sequence is that of V-type proton ATPase catalytic subunit A (VMA1) from Encephalitozoon cuniculi (strain GB-M1) (Microsporidian parasite).